Reading from the N-terminus, the 2324-residue chain is Myomegalin (2324 aa).

4 coiled-coil regions span residues 41–132 (REDV…LVEA), 158–205 (QVKL…LLEE), 238–288 (DSHL…SLKE), and 348–638 (LFCS…NKQA). Disordered regions lie at residues 72–96 (TWAD…EPQQ) and 205–240 (EPGG…SDSH). Positions 85–96 (AELRRQVEEPQQ) are enriched in basic and acidic residues. A compositionally biased stretch (polar residues) spans 219–238 (PTQQKPDLNETPTTQPSVSD). Residues 701–747 (PAGATSVGPHHGEQTDQGSTQMPSRDDSTSLTAREEASIPRSTLGDS) are disordered. Thr-705 is modified (phosphothreonine). Over residues 724 to 738 (SRDDSTSLTAREEAS) the composition is skewed to basic and acidic residues. 3 coiled-coil regions span residues 745–822 (GDSD…QLVD), 855–923 (ENRR…EEVL), and 1011–1043 (LRAE…GFSS). Disordered stretches follow at residues 1155-1182 (LPSS…SLKL) and 1195-1216 (NKSQ…STKH). 3 coiled-coil regions span residues 1213 to 1241 (STKH…SEAT), 1346 to 1384 (TSDD…LSAT), and 1430 to 1455 (GLQA…PKTG). Disordered regions lie at residues 1540-1559 (TDRL…KEEA), 1589-1610 (RFSS…SSTS), 1628-1685 (YTHY…IPKP), 1742-1773 (APPT…SPAR), 1857-1877 (LSST…GLES), and 2081-2140 (NQQP…TPPK). The region spanning 1550–1641 (KDHKSEKEEA…EEKKPSPSNS (92 aa)) is the Olduvai domain. Composition is skewed to low complexity over residues 1591–1610 (SSPP…SSTS) and 1637–1646 (SPSNSAASAS). Residues 1743 to 1767 (PPTSTSTLLSNHTEASSPRYSNPAQ) show a composition bias toward polar residues. A coiled-coil region spans residues 1821–2056 (GADLLEEHLG…LRLQLEQQMD (236 aa)). 2 stretches are compositionally biased toward polar residues: residues 2081–2090 (NQQPPFQGSA) and 2108–2135 (PSNS…SAAT). Positions 2248 to 2274 (EEGNLMEKELLDLRAQVSQQQQLLQST) form a coiled coil.

As to quaternary structure, interacts with PDE4D. May interact with MAPRE1 and MAPRE3. May form a pericentrosomal complex with AKAP9, CDK5RAP2 and EB1/MAPRE1 in an isoform-specific manner; within this complex, may mediate MAPRE1-binding to CDK5RAP2. Interaction with AKAP9 stabilizes both proteins. May interact with CAMSAP2 in an isoform-specific manner; this interaction is much stronger in the presence of AKAP9. In complex with AKAP9, recruits CAMSAP2 to the Golgi apparatus. May interact with unglycosylated LGALS3BP in an isoform-specific manner; this interaction may connect the pericentrosomal complex to the gamma-tubulin ring complex (gamma-TuRC) to promote microtubule assembly and acetylation. As to expression, abundantly expressed in heart and skeletal muscle and to a lower extent in brain, lung and liver. Expressed in heart, skeletal muscle and testis (at protein level).

It is found in the cytoplasm. The protein resides in the cytoskeleton. The protein localises to the microtubule organizing center. It localises to the centrosome. Its subcellular location is the golgi apparatus. Functionally, functions as an anchor sequestering components of the cAMP-dependent pathway to Golgi and/or centrosomes. May participate in microtubule dynamics, promoting microtubule assembly, in an isoform-specific manner. Depending upon the cell context, may act at the level of the Golgi apparatus or that of the centrosome. In complex with AKAP9, recruits CAMSAP2 to the Golgi apparatus and tethers non-centrosomal minus-end microtubules to the Golgi, an important step for polarized cell movement. In complex with AKAP9, EB1/MAPRE1 and CDK5RAP2, contributes to microtubules nucleation and extension from the centrosome to the cell periphery, a crucial process for directed cell migration, mitotic spindle orientation and cell-cycle progression. The chain is Myomegalin (Pde4dip) from Rattus norvegicus (Rat).